A 457-amino-acid polypeptide reads, in one-letter code: Argininosuccinate lyase (457 aa).

The protein belongs to the lyase 1 family. Argininosuccinate lyase subfamily.

Its subcellular location is the cytoplasm. The enzyme catalyses 2-(N(omega)-L-arginino)succinate = fumarate + L-arginine. It participates in amino-acid biosynthesis; L-arginine biosynthesis; L-arginine from L-ornithine and carbamoyl phosphate: step 3/3. The sequence is that of Argininosuccinate lyase from Pasteurella multocida (strain Pm70).